The chain runs to 149 residues: MMTKHKKCFIIVGVLITTNIITLIVKLTRDSQSLCPYDWIGFQNKCYYFSKEEGDWNSSKYNCSTQHADLTIIDNIEEMNFLRRYKCSSDHWIGLKMAKNRTGQWVDGATFTKSFGMRGSEGCAYLSDDGAATARCYTERKWICRKRIH.

Residues 1–7 (MMTKHKK) lie on the Cytoplasmic side of the membrane. The chain crosses the membrane as a helical; Signal-anchor for type II membrane protein span at residues 8–25 (CFIIVGVLITTNIITLIV). At 26-149 (KLTRDSQSLC…RKWICRKRIH (124 aa)) the chain is on the extracellular side. Residues Cys-35 and Cys-46 are joined by a disulfide bond. One can recognise a C-type lectin domain in the interval 42–145 (FQNKCYYFSK…CYTERKWICR (104 aa)). Asn-57, Asn-62, and Asn-100 each carry an N-linked (GlcNAc...) asparagine glycan. 2 cysteine pairs are disulfide-bonded: Cys-63/Cys-144 and Cys-123/Cys-136.

As to quaternary structure, homodimer. Interacts with NKp80/KLRF1. (Microbial infection) Ubiquitinated by human herpesvirus 8 protein K5, leading to endolysosomal degradation. In terms of processing, N-linked glycosylated; required to enable surface expression and the extent of surface expression correlates with the number of functional conventional N-glycosylation sites. In terms of tissue distribution, expressed preferentially in lymphoid tissues, and in most hematopoietic cell types.

It is found in the cell membrane. The protein resides in the golgi apparatus membrane. In terms of biological role, membrane-bound protein expressed on myeloid cells which acts as a ligand to stimulate the activating receptor NKp80/KLRF1, expressed on the surface of natural killer (NK) cells. In turn, stimulates NK-cell cytotoxicity and cytokine production leading to the cytolysis of malignant CLEC2B-expressing myeloid cells. The sequence is that of C-type lectin domain family 2 member B (CLEC2B) from Homo sapiens (Human).